We begin with the raw amino-acid sequence, 363 residues long: MSGNTYGKLFTVTSAGESHGPALVAIVDGCPPGLELSAQDLQRDLDRRKPGTSRHTTQRQEADEVEILSGVFEGRTTGTPIGLLIRNTDQKSKDYSAIKDLFRPAHADYTYHHKYGVRDYRGGGRSSARETAMRVAAGAIAKKYLAGLGIRVRGYMSQLGPIEIPFKTWDSVERNAFFSPDPDKVPELEAYMDQLRRDQDSIGAKITVVAEGVPPGLGEPIFDRLDAELAHALMSINAVKGVEIGAGFASIAQRGTEHRDELTPQGFLSNNAGGILGGISSGQPIVAHLALKPTSSITTPGRSIDTAGEPVDMITKGRHDPCVGIRATPIAEAMMAIVLLDQLLRQRGQNADVRVDTPILPQL.

Positions 48 and 54 each coordinate NADP(+). FMN-binding positions include 125–127, 237–238, Gly277, 292–296, and Arg318; these read RSS, NA, and KPTSS.

Belongs to the chorismate synthase family. Homotetramer. Requires FMNH2 as cofactor.

It carries out the reaction 5-O-(1-carboxyvinyl)-3-phosphoshikimate = chorismate + phosphate. It participates in metabolic intermediate biosynthesis; chorismate biosynthesis; chorismate from D-erythrose 4-phosphate and phosphoenolpyruvate: step 7/7. Functionally, catalyzes the anti-1,4-elimination of the C-3 phosphate and the C-6 proR hydrogen from 5-enolpyruvylshikimate-3-phosphate (EPSP) to yield chorismate, which is the branch point compound that serves as the starting substrate for the three terminal pathways of aromatic amino acid biosynthesis. This reaction introduces a second double bond into the aromatic ring system. The polypeptide is Chorismate synthase (Pseudomonas paraeruginosa (strain DSM 24068 / PA7) (Pseudomonas aeruginosa (strain PA7))).